A 1491-amino-acid polypeptide reads, in one-letter code: Chromosome partition protein MukB (1491 aa).

34-41 (GGNGAGKS) contributes to the ATP binding site. Coiled coils occupy residues 302–450 (LIEQ…LKAE), 490–600 (ARSE…RFES), 781–806 (RAAR…AKAS), 836–1109 (EQAL…DLRT), and 1210–1239 (VEAI…ISSD). Residues 667–784 (PGGSNDPRLK…AIPLFGRAAR (118 aa)) form a flexible hinge region. The disordered stretch occupies residues 1059–1080 (QRRRDELQERLHTSRSRKSEYE).

The protein belongs to the SMC family. MukB subfamily. In terms of assembly, homodimerization via its hinge domain. Binds to DNA via its C-terminal region. Interacts, and probably forms a ternary complex, with MukE and MukF via its C-terminal region. The complex formation is stimulated by calcium or magnesium. Interacts with tubulin-related protein FtsZ.

The protein resides in the cytoplasm. Its subcellular location is the nucleoid. Plays a central role in chromosome condensation, segregation and cell cycle progression. Functions as a homodimer, which is essential for chromosome partition. Involved in negative DNA supercoiling in vivo, and by this means organize and compact chromosomes. May achieve or facilitate chromosome segregation by condensation DNA from both sides of a centrally located replisome during cell division. The polypeptide is Chromosome partition protein MukB (Vibrio cholerae serotype O1 (strain ATCC 39315 / El Tor Inaba N16961)).